The chain runs to 147 residues: UPF0178 protein IL2341 (147 aa).

This sequence belongs to the UPF0178 family.

The polypeptide is UPF0178 protein IL2341 (Idiomarina loihiensis (strain ATCC BAA-735 / DSM 15497 / L2-TR)).